The following is a 603-amino-acid chain: 65-kDa microtubule-associated protein 7 (603 aa).

Coiled-coil stretches lie at residues 48–79 (KECL…EAEI), 131–186 (DIKA…EKSD), and 468–502 (RLVS…LLIK). The tract at residues 501–559 (IKRRESIYGSKPSPRRSNSVRKTNGYNGDASVPPTPRRNSAGATNNDIMTTPRSYSSHR) is disordered. The residue at position 513 (S513) is a Phosphoserine. Composition is skewed to polar residues over residues 515–526 (RRSNSVRKTNGY) and 537–559 (RRNS…SSHR). A Phosphoserine modification is found at S599.

This sequence belongs to the MAP65/ASE1 family. In terms of assembly, forms dimer. Binds to microtubules (MT).

It localises to the nucleus. It is found in the cytoplasm. The protein resides in the cytoskeleton. The protein localises to the spindle pole. The polypeptide is 65-kDa microtubule-associated protein 7 (MAP65-7) (Arabidopsis thaliana (Mouse-ear cress)).